Consider the following 236-residue polypeptide: Small ribosomal subunit protein uS2c (236 aa).

The protein belongs to the universal ribosomal protein uS2 family.

Its subcellular location is the plastid. It is found in the chloroplast. The sequence is that of Small ribosomal subunit protein uS2c (rps2) from Oenothera parviflora (Small-flowered evening primrose).